The following is a 340-amino-acid chain: Armadillo repeat-containing protein 12 (340 aa).

Residues 1–101 (MGKTIPRFLE…NITRCVYLLE (101 aa)) form an interaction with TBC1D15 region. 3 ARM repeats span residues 100–139 (LEAEASSCTMDDIDLVADMLDEKDNSVKIQALNALKAFSG), 179–218 (LPDYVHPQLRRVMPALMEIIQSDCILAQVQAVRLLSYLAQ), and 278–318 (SLHE…SLQC). The interval 321–340 (DLGSRPSSCRPSHSCFKTGK) is disordered. The span at 324-340 (SRPSSCRPSHSCFKTGK) shows a compositional bias: low complexity.

Interacts with TBC1D15, TBC1D21, GK2 and IMMT. Interacts with VDAC2 and VDAC3 in a TBC1D21-dependent manner. Interacts (via ARM domains) with RBBP4. As to expression, testis-specific.

The protein resides in the nucleus. It is found in the mitochondrion outer membrane. Its function is as follows. Essential for male fertility and sperm mitochondrial sheath formation. Required for proper mitochondrial elongation and coiling along the flagellum during the formation of the mitochondrial sheath. Facilitates the growth and aggressiveness of neuroblastoma cells. Increases the EZH2 activity and H3K27me3 levels in a RBBP4-dependent manner, and facilitates the enrichment of polycomb repressive complex 2 and H3K27me3 on gene promoters, resulting in transcriptional repression of tumor suppressors affecting the proliferation, invasion, and metastasis of tumor cells. In Mus musculus (Mouse), this protein is Armadillo repeat-containing protein 12 (Armc12).